A 249-amino-acid polypeptide reads, in one-letter code: NAD(P)H-hydrate epimerase (249 aa).

Residues Ala11–Ile233 form the YjeF N-terminal domain. Asn62–Asp66 contributes to the (6S)-NADPHX binding site. Residues Gln63 and Asp127 each coordinate K(+). (6S)-NADPHX is bound by residues Gly131–Pro137 and Asp162. A K(+)-binding site is contributed by Ser165.

Belongs to the NnrE/AIBP family. K(+) serves as cofactor.

The protein resides in the cytoplasm. It is found in the mitochondrion. It catalyses the reaction (6R)-NADHX = (6S)-NADHX. The catalysed reaction is (6R)-NADPHX = (6S)-NADPHX. In terms of biological role, catalyzes the epimerization of the S- and R-forms of NAD(P)HX, a damaged form of NAD(P)H that is a result of enzymatic or heat-dependent hydration. This is a prerequisite for the S-specific NAD(P)H-hydrate dehydratase to allow the repair of both epimers of NAD(P)HX. The chain is NAD(P)H-hydrate epimerase from Cryptococcus neoformans var. neoformans serotype D (strain JEC21 / ATCC MYA-565) (Filobasidiella neoformans).